Here is a 526-residue protein sequence, read N- to C-terminus: Protein spinster homolog 1 (526 aa).

The segment at 1-43 (MTSRSSQGDAAPFLTQADNTEEEGAPDPGGHSSDEEEEEGKDH) is disordered. The next 12 membrane-spanning stretches (helical) occupy residues 48 to 68 (HLLT…LFYI), 98 to 118 (GLVQ…FGYL), 126 to 146 (LIMC…SFVS), 159 to 179 (LVGV…ADLF), 187 to 207 (MLSF…IAGS), 218 to 238 (WALR…IFVA), 272 to 292 (FILS…LALW), 321 to 341 (MIFG…GVEI), 355 to 375 (LVCA…LAFA), 385 to 405 (FIFI…DILL), 419 to 439 (LQIV…IGVI), and 463 to 483 (MICA…ALFI).

This sequence belongs to the major facilitator superfamily. Spinster (TC 2.A.1.49) family.

Its subcellular location is the lysosome membrane. It catalyses the reaction a 1-acyl-sn-glycero-3-phosphocholine(out) + H(+)(out) = a 1-acyl-sn-glycero-3-phosphocholine(in) + H(+)(in). The catalysed reaction is a 1-acyl-sn-glycero-3-phosphoethanolamine(out) + H(+)(out) = a 1-acyl-sn-glycero-3-phosphoethanolamine(in) + H(+)(in). The enzyme catalyses a 1-O-(1Z-alkenyl)-sn-glycero-3-phosphocholine(out) + H(+)(out) = a 1-O-(1Z-alkenyl)-sn-glycero-3-phosphocholine(in) + H(+)(in). It carries out the reaction a 1-O-(1Z-alkenyl)-sn-glycero-3-phosphoethanolamine(out) + H(+)(out) = a 1-O-(1Z-alkenyl)-sn-glycero-3-phosphoethanolamine(in) + H(+)(in). Its function is as follows. Mediates the rate-limiting, proton-dependent, lysosomal efflux of lysophospholipids. Selective for zwitterionic headgroups such as lysophosphatidylcholine (LPC) and lysophosphatidylethanolamine (LPE). Essential player in lysosomal homeostasis. This is Protein spinster homolog 1 (spns1) from Xenopus tropicalis (Western clawed frog).